A 1679-amino-acid chain; its full sequence is Probable myosin heavy chain ECU04_1000 (1679 aa).

The span at 1–14 (MEGTTNKDIGSGSS) shows a compositional bias: polar residues. A disordered region spans residues 1–22 (MEGTTNKDIGSGSSRPGGEVSV). Positions 31-79 (MEKKWVWAPSSKEAYVCGFVVKEEGDVLEIDCRGVIVRHKSCEVFRMNP) constitute a Myosin N-terminal SH3-like domain. Positions 83–754 (DMVDDLAELS…VLADIEDMRD (672 aa)) constitute a Myosin motor domain. 176 to 183 (GESGAGKT) is an ATP binding site. The segment at 624 to 646 (LASLMSELRRTNPHFVRCIIPNL) is actin-binding. The stretch at 823 to 1644 (GEMKEKEAMI…SKMLEMKKKL (822 aa)) forms a coiled coil.

This sequence belongs to the TRAFAC class myosin-kinesin ATPase superfamily. Myosin family.

In terms of biological role, cellular myosin that appears to play a role in cytokinesis, cell shape, and specialized functions such as secretion and capping. In Encephalitozoon cuniculi (strain GB-M1) (Microsporidian parasite), this protein is Probable myosin heavy chain ECU04_1000.